The following is a 329-amino-acid chain: Beta-ketoacyl-[acyl-carrier-protein] synthase III (329 aa).

Residues Cys113 and His255 contribute to the active site. Positions 256–260 are ACP-binding; that stretch reads QANQR. Residue Asn285 is part of the active site.

It belongs to the thiolase-like superfamily. FabH family. As to quaternary structure, homodimer.

It is found in the cytoplasm. It catalyses the reaction malonyl-[ACP] + acetyl-CoA + H(+) = 3-oxobutanoyl-[ACP] + CO2 + CoA. The protein operates within lipid metabolism; fatty acid biosynthesis. Catalyzes the condensation reaction of fatty acid synthesis by the addition to an acyl acceptor of two carbons from malonyl-ACP. Catalyzes the first condensation reaction which initiates fatty acid synthesis and may therefore play a role in governing the total rate of fatty acid production. Possesses both acetoacetyl-ACP synthase and acetyl transacylase activities. Its substrate specificity determines the biosynthesis of branched-chain and/or straight-chain of fatty acids. This Chlorobium chlorochromatii (strain CaD3) protein is Beta-ketoacyl-[acyl-carrier-protein] synthase III.